The following is a 373-amino-acid chain: Chaperone protein DnaJ (373 aa).

The region spanning 5–71 (DYYEILGVSR…EKRAMYDKFG (67 aa)) is the J domain. A CR-type zinc finger spans residues 144 to 226 (GVKIPLEYDR…CGGTGRIRKR (83 aa)). The Zn(2+) site is built by Cys-157, Cys-160, Cys-174, Cys-177, Cys-200, Cys-203, Cys-214, and Cys-217. CXXCXGXG motif repeat units lie at residues 157 to 164 (CEHCHGEG), 174 to 181 (CPKCHGTG), 200 to 207 (CNQCGGTG), and 214 to 221 (CRVCGGTG).

It belongs to the DnaJ family. In terms of assembly, homodimer. It depends on Zn(2+) as a cofactor.

It is found in the cytoplasm. Functionally, participates actively in the response to hyperosmotic and heat shock by preventing the aggregation of stress-denatured proteins and by disaggregating proteins, also in an autonomous, DnaK-independent fashion. Unfolded proteins bind initially to DnaJ; upon interaction with the DnaJ-bound protein, DnaK hydrolyzes its bound ATP, resulting in the formation of a stable complex. GrpE releases ADP from DnaK; ATP binding to DnaK triggers the release of the substrate protein, thus completing the reaction cycle. Several rounds of ATP-dependent interactions between DnaJ, DnaK and GrpE are required for fully efficient folding. Also involved, together with DnaK and GrpE, in the DNA replication of plasmids through activation of initiation proteins. This chain is Chaperone protein DnaJ, found in Thermosipho melanesiensis (strain DSM 12029 / CIP 104789 / BI429).